The chain runs to 198 residues: Glycerol-3-phosphate acyltransferase 2 (198 aa).

Transmembrane regions (helical) follow at residues 4-24 (TYLL…LVVG), 71-91 (LPII…AVLG), 113-133 (LLCY…SLLF), and 147-167 (VVAV…AMCL).

This sequence belongs to the PlsY family. Probably interacts with PlsX.

It is found in the cell membrane. It catalyses the reaction an acyl phosphate + sn-glycerol 3-phosphate = a 1-acyl-sn-glycero-3-phosphate + phosphate. It functions in the pathway lipid metabolism; phospholipid metabolism. Functionally, catalyzes the transfer of an acyl group from acyl-phosphate (acyl-PO(4)) to glycerol-3-phosphate (G3P) to form lysophosphatidic acid (LPA). This enzyme utilizes acyl-phosphate as fatty acyl donor, but not acyl-CoA or acyl-ACP. The sequence is that of Glycerol-3-phosphate acyltransferase 2 from Bacillus cereus (strain ATCC 10987 / NRS 248).